Reading from the N-terminus, the 51-residue chain is Large ribosomal subunit protein bL33 (51 aa).

The tract at residues 1–24 (MREKIRLNSSAGTGHFYTTDKNKR) is disordered.

The protein belongs to the bacterial ribosomal protein bL33 family.

The chain is Large ribosomal subunit protein bL33 from Cellvibrio japonicus (strain Ueda107) (Pseudomonas fluorescens subsp. cellulosa).